A 439-amino-acid chain; its full sequence is UDP-N-acetylmuramoylalanine--D-glutamate ligase (439 aa).

An ATP-binding site is contributed by 112–118; that stretch reads GSNGKST.

It belongs to the MurCDEF family.

The protein resides in the cytoplasm. The enzyme catalyses UDP-N-acetyl-alpha-D-muramoyl-L-alanine + D-glutamate + ATP = UDP-N-acetyl-alpha-D-muramoyl-L-alanyl-D-glutamate + ADP + phosphate + H(+). It functions in the pathway cell wall biogenesis; peptidoglycan biosynthesis. In terms of biological role, cell wall formation. Catalyzes the addition of glutamate to the nucleotide precursor UDP-N-acetylmuramoyl-L-alanine (UMA). This chain is UDP-N-acetylmuramoylalanine--D-glutamate ligase, found in Mannheimia succiniciproducens (strain KCTC 0769BP / MBEL55E).